Reading from the N-terminus, the 246-residue chain is Triosephosphate isomerase (246 aa).

9 to 11 contributes to the substrate binding site; that stretch reads NWK. The Electrophile role is filled by His-95. The Proton acceptor role is filled by Glu-165. Residues Gly-171, Ser-210, and 231–232 each bind substrate; that span reads GG.

The protein belongs to the triosephosphate isomerase family. Homodimer.

Its subcellular location is the cytoplasm. It carries out the reaction D-glyceraldehyde 3-phosphate = dihydroxyacetone phosphate. Its pathway is carbohydrate biosynthesis; gluconeogenesis. It functions in the pathway carbohydrate degradation; glycolysis; D-glyceraldehyde 3-phosphate from glycerone phosphate: step 1/1. Involved in the gluconeogenesis. Catalyzes stereospecifically the conversion of dihydroxyacetone phosphate (DHAP) to D-glyceraldehyde-3-phosphate (G3P). This Thermodesulfovibrio yellowstonii (strain ATCC 51303 / DSM 11347 / YP87) protein is Triosephosphate isomerase.